Reading from the N-terminus, the 463-residue chain is Na(+)/H(+) antiporter NhaA 3 (463 aa).

A run of 11 helical transmembrane segments spans residues 28 to 48 (FLATEAGGAVLLLLAAVAALL), 79 to 99 (LHHWVNDGAMAIFFAVVGLEI), 114 to 134 (IAVPALGAIGGLILPAAIYFV), 144 to 164 (GWGIPMSTDTAFVIGILALFG), 173 to 193 (LFLLTLAIVDDIGAITVVGIF), 196 to 216 (DHLNPVGLAVAGATVLAILGL), 232 to 252 (LVLWGAIHVSGVHATLAGVLV), 305 to 325 (VLHPISAFVVVPVFGLANAGV), 344 to 364 (VAAALIAGNACGISVAGVAAI), 377 to 397 (YGHLLGAATLAGIGFTISLFI), and 413 to 433 (IGILAGSLVAALAGTVILRVL). A disordered region spans residues 444 to 463 (TDEPVPRLPPRPWRAPVPAK). The segment covering 449 to 463 (PRLPPRPWRAPVPAK) has biased composition (pro residues).

Belongs to the NhaA Na(+)/H(+) (TC 2.A.33) antiporter family.

Its subcellular location is the cell membrane. The catalysed reaction is Na(+)(in) + 2 H(+)(out) = Na(+)(out) + 2 H(+)(in). Functionally, na(+)/H(+) antiporter that extrudes sodium in exchange for external protons. This chain is Na(+)/H(+) antiporter NhaA 3, found in Frankia alni (strain DSM 45986 / CECT 9034 / ACN14a).